Consider the following 1186-residue polypeptide: MYND-type zinc finger-containing chromatin reader ZMYND8 (1186 aa).

Residues 1–12 (MDISTRSKDPGS) are compositionally biased toward basic and acidic residues. The segment at 1–57 (MDISTRSKDPGSAERTAQKRKFPSPPHSSNGHSPQDTSTSPIKKKKKPGLLNSNNKE) is disordered. Residues 1-850 (MDISTRSKDP…QQQQQQQNQQ (850 aa)) are required for interaction with CCNT1. A Glycyl lysine isopeptide (Lys-Gly) (interchain with G-Cter in SUMO2) cross-link involves residue S12. Residue S24 is modified to Phosphoserine. Residues K56 and K70 each participate in a glycyl lysine isopeptide (Lys-Gly) (interchain with G-Cter in SUMO2) cross-link. Residues 75-268 (TDPVDVVPQD…YLAACQKRDN (194 aa)) are interaction with histone H3K4me0. Positions 75 to 406 (TDPVDVVPQD…VKLNFDMTAS (332 aa)) are interaction with histone H3K14ac. A PHD-type zinc finger spans residues 88 to 133 (DFYCWVCHREGQVLCCELCPRVYHAKCLRLTSEPEGDWFCPECEKI). The tract at residues 88 to 327 (DFYCWVCHRE…INNCYLMSKE (240 aa)) is required for interaction with histone H3 and histone H4. Residues C91, C94, C103, C106, H111, C114, C127, and C130 each coordinate Zn(2+). In terms of domain architecture, Bromo spans 145 to 252 (AMTMLTIEQL…KICEHEMNEI (108 aa)). Zn(2+)-binding residues include C255, C258, and C274. The 51-residue stretch at 277 to 327 (PHPLVWAKLKGFPFWPAKALRDKDGQVDARFFGQHDRAWVPINNCYLMSKE) folds into the PWWP domain. K390 is covalently cross-linked (Glycyl lysine isopeptide (Lys-Gly) (interchain with G-Cter in SUMO2)). Position 404 is a phosphothreonine (T404). The residue at position 406 (S406) is a Phosphoserine. The segment at 412 to 512 (SKPVLSGGTG…TTKTDKTSTT (101 aa)) is disordered. At K413 the chain carries N6-acetyllysine; alternate. A Glycyl lysine isopeptide (Lys-Gly) (interchain with G-Cter in SUMO2); alternate cross-link involves residue K413. Residues S417, S425, and S432 each carry the phosphoserine modification. Polar residues predominate over residues 433–442 (PMSTNSSVHT). Residue S444 is modified to Phosphoserine. Residue K453 forms a Glycyl lysine isopeptide (Lys-Gly) (interchain with G-Cter in SUMO2) linkage. A phosphoserine mark is found at S460, S462, S465, S486, S490, and S495. The segment covering 472 to 489 (STASPASTKTGQAGSLSG) has biased composition (polar residues). K505 participates in a covalent cross-link: Glycyl lysine isopeptide (Lys-Gly) (interchain with G-Cter in SUMO2). S514 and S523 each carry phosphoserine. A Glycyl lysine isopeptide (Lys-Gly) (interchain with G-Cter in SUMO2) cross-link involves residue K530. Residue T541 is modified to Phosphothreonine. S547 is subject to Phosphoserine. A Glycyl lysine isopeptide (Lys-Gly) (interchain with G-Cter in SUMO2) cross-link involves residue K549. Phosphothreonine is present on T563. Positions 582 to 884 (TAVEHSDSED…ITQSPSTSTI (303 aa)) are disordered. Composition is skewed to basic and acidic residues over residues 585–597 (EHSD…KSDS) and 606–631 (DEQK…EPSA). Glycyl lysine isopeptide (Lys-Gly) (interchain with G-Cter in SUMO2) cross-links involve residues K611 and K645. A phosphoserine mark is found at S652 and S655. Positions 656–696 (EKADPGAVKDKASPEPEKDFSEKAKPSPHPIKDKLKGKDET) are enriched in basic and acidic residues. Residue K657 forms a Glycyl lysine isopeptide (Lys-Gly) (interchain with G-Cter in SUMO2) linkage. Residues S668, S682, S707, S709, and S737 each carry the phosphoserine modification. A compositionally biased stretch (basic and acidic residues) spans 718–738 (GEDHSGREGRKNKKEPKEPSP). At T746 the chain carries Phosphothreonine. Residues S754 and S756 each carry the phosphoserine modification. Residues 766–799 (SSAQTSAAGATATTSTSSTVTVTAPAPAATGSPV) show a composition bias toward low complexity. Residues 818 to 832 (VWNSSSKFQTSSQKW) are compositionally biased toward polar residues. Residues 835–857 (QKMQRQQQQQQQQNQQQQPQSSQ) are compositionally biased toward low complexity. Residues 873-884 (KEITQSPSTSTI) are compositionally biased toward polar residues. The required for homodimerization stretch occupies residues 875–1047 (ITQSPSTSTI…YCCWNTSYCD (173 aa)). Residues C1028, C1031, C1039, C1040, C1046, C1050, H1058, and C1062 each contribute to the Zn(2+) site. The MYND-type zinc finger occupies 1028 to 1062 (CANCKKEAIFYCCWNTSYCDYPCQQAHWPEHMKSC). Residues 1028 to 1062 (CANCKKEAIFYCCWNTSYCDYPCQQAHWPEHMKSC) are required for recruitment to DNA damage sites and for interaction with the NuRD complex, CHD4, HDAC1, HDAC2 and KDM1A. The interval 1071–1186 (QEADAEVNTE…KESRLDTFWD (116 aa)) is disordered. Over residues 1085–1103 (SSQGSSSSTQSAPSETASA) the composition is skewed to low complexity. Residues 1104–1116 (SKEKETSAEKSKE) show a composition bias toward basic and acidic residues. K1115 participates in a covalent cross-link: Glycyl lysine isopeptide (Lys-Gly) (interchain with G-Cter in SUMO2). S1119 carries the phosphoserine modification. Residues 1121–1140 (LDLSGSRETPSSILLGSNQG) show a composition bias toward polar residues. The residue at position 1141 (S1141) is a Phosphoserine. Residues 1147 to 1186 (NKSSWSSSDEKRGSTRSDHNTSTSTKSLLPKESRLDTFWD) are interaction with PRKCB1. Basic and acidic residues-rich tracts occupy residues 1154-1165 (SDEKRGSTRSDH) and 1175-1186 (LPKESRLDTFWD).

In terms of assembly, monomer and homodimer. Interacts with NuRD subcomplexes containing GATAD2A. Interacts with the histone deacetylase NuRD complex subunit CHD4; the interaction is direct, appears to occur with monomeric ZMYND8, and is increased following DNA damage. Interacts (via N-terminus) with the P-TEFb complex subunit CCNT1 (via central region); the interaction is direct and the association appears to occur between homodimeric ZMYND8 and the activated form of the P-TEFb complex. Interacts (via N-terminus) with DBN1 (via ADF-H domain); the interaction leads to sequestering of ZMYND8 in the cytoplasm. Interacts with the P-TEFb complex subunit CDK9; the association appears to occur between homodimeric ZMYND8 and the activated form of the P-TEFb complex. Interacts with EZH2; the interaction is dependent on the presence of chromatin. Interacts (via MYND domain) with the NuRD complex subunit GATAD2A. Interacts with histone H3 (via N-terminus) that is both methylated at 'Lys-4' (H3K4me1) and acetylated at 'Lys-14' (H3K14ac), with histone H3 (via N-terminus) unmodified at 'Lys-4' (H3K4me0) and acetylated at 'Lys-14' (H3K14ac), and with histone H3 (via N-terminus) di-methylated at 'Lys-36' (H3K36me2). Interacts (via Bromo domain) with histone H4 acetylated at 'Lys-16' (H4K16ac). Interacts with HDAC1. Interacts with HDAC2. Interacts with KDM1A. Interacts with KDM5C. Interacts with KDM5D. Interacts in vitro with PRKCB. Interacts with RNA polymerase II subunit POLR2A phosphorylated at 'Ser-5'. Interacts with ZNF592. Interacts with ZNF687. Does not interact with GATAD2B. As to expression, expressed in neurons (at protein level). Absent in astrocytes (at protein level). Expressed in all tissues examined with highest expression in brain, lung, pancreas, and placenta. Expressed in cutaneous T-cell lymphomas (CTCL).

The protein localises to the nucleus. It is found in the chromosome. The protein resides in the cytoplasm. Its function is as follows. Chromatin reader that recognizes dual histone modifications such as histone H3.1 dimethylated at 'Lys-36' and histone H4 acetylated at 'Lys-16' (H3.1K36me2-H4K16ac) and histone H3 methylated at 'Lys-4' and histone H4 acetylated at 'Lys-14' (H3K4me1-H3K14ac). May act as a transcriptional corepressor for KDM5D by recognizing the dual histone signature H3K4me1-H3K14ac. May also act as a transcriptional corepressor for KDM5C and EZH2. Recognizes acetylated histone H4 and recruits the NuRD chromatin remodeling complex to damaged chromatin for transcriptional repression and double-strand break repair by homologous recombination. Also activates transcription elongation by RNA polymerase II through recruiting the P-TEFb complex to target promoters. Localizes to H3.1K36me2-H4K16ac marks at all-trans-retinoic acid (ATRA)-responsive genes and positively regulates their expression. Promotes neuronal differentiation by associating with regulatory regions within the MAPT gene, to enhance transcription of a protein-coding MAPT isoform and suppress the non-coding MAPT213 isoform. Suppresses breast cancer, and prostate cancer cell invasion and metastasis. In Homo sapiens (Human), this protein is MYND-type zinc finger-containing chromatin reader ZMYND8 (ZMYND8).